The primary structure comprises 760 residues: MRYNQFSYIPTSLERAAEELKELGFDLDLQKTAKANLESFLRKLFFHYPDSDYPLSHLIAKNDMDALSFFQSEQELSKEVFDLLALQVLGFIPGVDFTEADAFLDKLAFPIHFDETEIIKHIHHLLATRCKSGMTLIDDLVSQGMLTMDNDYHFFNGKSLATFDTSQLIREVVYVEAPLDTDQDGQLDLIKVNIIRPQSQKPLPTLMTPSPYHQGINEVANDKKLYRMEKELVVKKRRQITVEDRDFIPLETQPCKLPIGQNLESFSYINSYSLNDYFLARGFANIYVSGVGTAGSTGFMTSGDYAQIESFKAVIDWLNGRATAYTSHSKTHQVRADWANGLVCTTGKSYLGTMSTGLATTGVDGLAMIIAESAISSWYNYYRENGLVCSPGGYPGEDLDVLTELTYSRNLLAGDYLRHNDRYQELLNQQSQALDRQSGDYNQFWHDRNYLKNAHQIKCDVVYTHGLQDWNVKPRQVYEIVNALPSTINKHLFLHQGEHVYMHNWQSIDFRESMNALLCQKLLGLANDFSLPEMIWQDNTCPQNWQERKVFGTSTIKELDLGQELLLIDNHYGEDEFKAYGKDFRAFKAALFKGKANQALVDILLEEDLLINGEIVLQLKVKSSENKGLLSAQILDYGKKKRLGDLPIALTQSSIDNGQNFSREPLKELPFRENSYRVISKGFMNLQNRNNLSSIETIPNNKWMTVRLPLQPTIYHLEKGDTLRVILYTTDFEHTVRDNSNYALTIDLSQSQLIVPIASN.

Catalysis depends on charge relay system residues serine 349, aspartate 469, and histidine 499.

Belongs to the peptidase S15 family. As to quaternary structure, homodimer.

The protein resides in the cytoplasm. It carries out the reaction Hydrolyzes Xaa-Pro-|- bonds to release unblocked, N-terminal dipeptides from substrates including Ala-Pro-|-p-nitroanilide and (sequentially) Tyr-Pro-|-Phe-Pro-|-Gly-Pro-|-Ile.. In terms of biological role, removes N-terminal dipeptides sequentially from polypeptides having unsubstituted N-termini provided that the penultimate residue is proline. In Streptococcus pyogenes serotype M3 (strain ATCC BAA-595 / MGAS315), this protein is Xaa-Pro dipeptidyl-peptidase.